Reading from the N-terminus, the 291-residue chain is HTH-type transcriptional activator AmpR (291 aa).

The HTH lysR-type domain occupies 6–63 (IPLNSLRAFEAAARHLSFTRAAIELNVTHSAISQHVKSLEQQLNCQLFVRGSRGLMLT). The segment at residues 23–42 (FTRAAIELNVTHSAISQHVK) is a DNA-binding region (H-T-H motif).

It belongs to the LysR transcriptional regulatory family.

It is found in the cytoplasm. Its function is as follows. Regulates the expression of the beta-lactamase gene. Represses cephalosporinase (AmpC) in the presence of beta-lactams and induces it in the absence of them. The sequence is that of HTH-type transcriptional activator AmpR (ampR) from Citrobacter freundii.